We begin with the raw amino-acid sequence, 247 residues long: Carboxy-S-adenosyl-L-methionine synthase (247 aa).

Residues Tyr-39, 64–66 (GCS), 89–90 (DN), 117–118 (DI), Asn-132, and Arg-199 each bind S-adenosyl-L-methionine.

The protein belongs to the class I-like SAM-binding methyltransferase superfamily. Cx-SAM synthase family. Homodimer.

It carries out the reaction prephenate + S-adenosyl-L-methionine = carboxy-S-adenosyl-L-methionine + 3-phenylpyruvate + H2O. In terms of biological role, catalyzes the conversion of S-adenosyl-L-methionine (SAM) to carboxy-S-adenosyl-L-methionine (Cx-SAM). The chain is Carboxy-S-adenosyl-L-methionine synthase from Cronobacter sakazakii (strain ATCC BAA-894) (Enterobacter sakazakii).